We begin with the raw amino-acid sequence, 106 residues long: Probable glutaredoxin (106 aa).

The region spanning 8–106 (IVQKITGADP…AKYLDVQFTQ (99 aa)) is the Glutaredoxin domain. Cysteines 28 and 31 form a disulfide.

Belongs to the glutaredoxin family.

It localises to the virion. This chain is Probable glutaredoxin, found in Acanthamoeba polyphaga mimivirus (APMV).